Reading from the N-terminus, the 103-residue chain is CLAVATA3/ESR (CLE)-related protein 16 (103 aa).

An N-terminal signal peptide occupies residues 1–21 (MEACSRKRRRRRAYTTSTTGY). The segment at 71–103 (VSFTGQRREEENRDEVYKDDKRLVHTGPNPLHN) is disordered. Residues 76-93 (QRREEENRDEVYKDDKRL) show a composition bias toward basic and acidic residues. Residue proline 98 is modified to Hydroxyproline. Residue proline 98 is glycosylated (O-linked (Ara...) hydroxyproline).

This sequence belongs to the CLV3/ESR signal peptide family. In terms of processing, the O-glycosylation (arabinosylation) of the hydroxyproline Pro-98 enhances binding affinity of the CLE16p peptide for its receptor. Expressed in roots, stems, apex, seedlings, leaves, flowers and siliques.

It is found in the secreted. The protein localises to the extracellular space. Its function is as follows. Extracellular signal peptide that regulates cell fate. Represses root apical meristem maintenance. Regulates the transition of protophloem cells from proliferation to differentiation, thus impinging on postembryonic growth capacity of the root meristem; this signaling pathway requires CRN and CLV2. In Arabidopsis thaliana (Mouse-ear cress), this protein is CLAVATA3/ESR (CLE)-related protein 16.